The following is a 375-amino-acid chain: CC-adding tRNA nucleotidyltransferase (375 aa).

27 to 30 lines the CTP pocket; it reads GAVR. D40 and D42 together coordinate Mg(2+). CTP contacts are provided by residues 95 to 96, N100, 137 to 146, and R177; these read RD and DPLRMLRAPR.

The protein belongs to the tRNA nucleotidyltransferase/poly(A) polymerase family. It depends on Mg(2+) as a cofactor.

The catalysed reaction is a tRNA precursor + 2 CTP = a tRNA with a 3' CC end + 2 diphosphate. TRNA nucleotidyltransferase involved in the synthesis of the tRNA CCA terminus. Adds the two cytidine residues to tRNA. This Halalkalibacterium halodurans (strain ATCC BAA-125 / DSM 18197 / FERM 7344 / JCM 9153 / C-125) (Bacillus halodurans) protein is CC-adding tRNA nucleotidyltransferase.